A 134-amino-acid polypeptide reads, in one-letter code: MPPKARSGARRTGRRVVKKNVAQGHAYIKSTFNNTIVSITDPNGAVISWASSGHVGFKGSRKSTPFAAQMAAENAARKAMDHGMKKVDVFVKGPGSGRETAIRSLQAAGLEVSSISDVTPQPHNGCRPPKRRRV.

Residues 114 to 134 (SISDVTPQPHNGCRPPKRRRV) are disordered.

This sequence belongs to the universal ribosomal protein uS11 family. As to quaternary structure, part of the 30S ribosomal subunit. Interacts with proteins S7 and S18. Binds to IF-3.

Its function is as follows. Located on the platform of the 30S subunit, it bridges several disparate RNA helices of the 16S rRNA. Forms part of the Shine-Dalgarno cleft in the 70S ribosome. This Corynebacterium efficiens (strain DSM 44549 / YS-314 / AJ 12310 / JCM 11189 / NBRC 100395) protein is Small ribosomal subunit protein uS11.